We begin with the raw amino-acid sequence, 220 residues long: Deoxyribose-phosphate aldolase (220 aa).

Asp89 serves as the catalytic Proton donor/acceptor. Lys151 (schiff-base intermediate with acetaldehyde) is an active-site residue. Catalysis depends on Lys180, which acts as the Proton donor/acceptor.

It belongs to the DeoC/FbaB aldolase family. DeoC type 1 subfamily.

Its subcellular location is the cytoplasm. It carries out the reaction 2-deoxy-D-ribose 5-phosphate = D-glyceraldehyde 3-phosphate + acetaldehyde. It functions in the pathway carbohydrate degradation; 2-deoxy-D-ribose 1-phosphate degradation; D-glyceraldehyde 3-phosphate and acetaldehyde from 2-deoxy-alpha-D-ribose 1-phosphate: step 2/2. Functionally, catalyzes a reversible aldol reaction between acetaldehyde and D-glyceraldehyde 3-phosphate to generate 2-deoxy-D-ribose 5-phosphate. The polypeptide is Deoxyribose-phosphate aldolase (Streptococcus pneumoniae (strain 70585)).